The following is a 138-amino-acid chain: Microneme antigen L2 (138 aa).

2 PAN domains span residues 9-78 and 82-138; these read CFAH…PRSC and CSDA…SKRA. Disulfide bonds link Cys-9/Cys-78, Cys-34/Cys-56, Cys-38/Cys-44, Cys-82/Cys-86, Cys-107/Cys-127, and Cys-111/Cys-117. Position 18 (Ser-18) interacts with a carbohydrate. 3 residues coordinate a carbohydrate: Lys-59, Tyr-66, and Asp-71.

As to quaternary structure, homodimer or heterodimer. Post-translationally, contains six disulfide bonds.

Its subcellular location is the cytoplasmic vesicle. It localises to the secretory vesicle. The protein resides in the microneme. Functionally, galactose-binding lectin. Plays a role in adhesion to the host cell. Has a potential role in invasion of host cells. This Sarcocystis muris protein is Microneme antigen L2.